We begin with the raw amino-acid sequence, 179 residues long: Large ribosomal subunit protein uL5 (179 aa).

It belongs to the universal ribosomal protein uL5 family. As to quaternary structure, part of the 50S ribosomal subunit; part of the 5S rRNA/L5/L18/L25 subcomplex. Contacts the 5S rRNA and the P site tRNA. Forms a bridge to the 30S subunit in the 70S ribosome.

Its function is as follows. This is one of the proteins that bind and probably mediate the attachment of the 5S RNA into the large ribosomal subunit, where it forms part of the central protuberance. In the 70S ribosome it contacts protein S13 of the 30S subunit (bridge B1b), connecting the 2 subunits; this bridge is implicated in subunit movement. Contacts the P site tRNA; the 5S rRNA and some of its associated proteins might help stabilize positioning of ribosome-bound tRNAs. The sequence is that of Large ribosomal subunit protein uL5 from Dehalococcoides mccartyi (strain ATCC BAA-2266 / KCTC 15142 / 195) (Dehalococcoides ethenogenes (strain 195)).